Here is an 853-residue protein sequence, read N- to C-terminus: DNA mismatch repair protein MutS (853 aa).

ATP is bound at residue 614–621; the sequence is GPNMGGKS.

Belongs to the DNA mismatch repair MutS family.

Functionally, this protein is involved in the repair of mismatches in DNA. It is possible that it carries out the mismatch recognition step. This protein has a weak ATPase activity. This is DNA mismatch repair protein MutS from Escherichia coli O1:K1 / APEC.